Consider the following 339-residue polypeptide: UDP-N-acetylenolpyruvoylglucosamine reductase (339 aa).

The region spanning 18-189 (GIDVKARYFS…LRVRFALTRT (172 aa)) is the FAD-binding PCMH-type domain. Arginine 166 is an active-site residue. Catalysis depends on serine 239, which acts as the Proton donor. Glutamate 335 is an active-site residue.

Belongs to the MurB family. FAD serves as cofactor.

The protein localises to the cytoplasm. It carries out the reaction UDP-N-acetyl-alpha-D-muramate + NADP(+) = UDP-N-acetyl-3-O-(1-carboxyvinyl)-alpha-D-glucosamine + NADPH + H(+). The protein operates within cell wall biogenesis; peptidoglycan biosynthesis. Functionally, cell wall formation. The sequence is that of UDP-N-acetylenolpyruvoylglucosamine reductase from Pseudomonas putida (strain ATCC 47054 / DSM 6125 / CFBP 8728 / NCIMB 11950 / KT2440).